We begin with the raw amino-acid sequence, 562 residues long: Undecaprenyl phosphate-alpha-4-amino-4-deoxy-L-arabinose arabinosyl transferase (562 aa).

Transmembrane regions (helical) follow at residues 14–34, 91–111, 120–140, 142–162, 186–206, 215–235, 267–287, 302–322, 324–344, 354–374, 395–415, and 425–445; these read IKFS…PLNY, FSVR…IYLF, ILSL…IIGT, SVLD…FWLA, FITK…IWLF, TIIH…PWIY, PFWY…GFLF, IEFY…ISKG, LPTY…KNIE, LLKI…IFII, LILC…IIFN, and LSII…IIYA.

It belongs to the glycosyltransferase 83 family.

Its subcellular location is the cell inner membrane. The enzyme catalyses 4-amino-4-deoxy-alpha-L-arabinopyranosyl di-trans,octa-cis-undecaprenyl phosphate + lipid IVA = lipid IIA + di-trans,octa-cis-undecaprenyl phosphate.. It functions in the pathway lipopolysaccharide metabolism; 4-amino-4-deoxy-beta-L-arabinose-lipid A biosynthesis. Its function is as follows. Catalyzes the transfer of the L-Ara4N moiety of the glycolipid undecaprenyl phosphate-alpha-L-Ara4N to lipid A. The modified arabinose is attached to lipid A and is required for resistance to polymyxin and cationic antimicrobial peptides. This chain is Undecaprenyl phosphate-alpha-4-amino-4-deoxy-L-arabinose arabinosyl transferase, found in Wigglesworthia glossinidia brevipalpis.